Reading from the N-terminus, the 355-residue chain is Putative [LysW]-L-2-aminoadipate/[LysW]-L-glutamate phosphate reductase (355 aa).

13-16 (SGMT) is an NADP(+) binding site. C153 is an active-site residue. N323 contributes to the NADP(+) binding site.

This sequence belongs to the NAGSA dehydrogenase family. Type 1 subfamily. LysY sub-subfamily.

It localises to the cytoplasm. The enzyme catalyses [amino-group carrier protein]-C-terminal-N-(1-carboxy-5-oxopentan-1-yl)-L-glutamine + phosphate + NADP(+) = [amino-group carrier protein]-C-terminal-N-(1-carboxy-5-phosphooxy-5-oxopentan-1-yl)-L-glutamine + NADPH + H(+). It carries out the reaction [amino-group carrier protein]-C-terminal-gamma-(L-glutamyl-5-semialdehyde)-L-glutamate + phosphate + NADP(+) = [amino-group carrier protein]-C-terminal-gamma-(5-phospho-L-glutamyl)-L-glutamate + NADPH + H(+). It participates in amino-acid biosynthesis; L-lysine biosynthesis via AAA pathway; L-lysine from L-alpha-aminoadipate (Thermus route): step 3/5. It functions in the pathway amino-acid biosynthesis; L-arginine biosynthesis. Its function is as follows. Involved in both the arginine and lysine biosynthetic pathways. This Aeropyrum pernix (strain ATCC 700893 / DSM 11879 / JCM 9820 / NBRC 100138 / K1) protein is Putative [LysW]-L-2-aminoadipate/[LysW]-L-glutamate phosphate reductase.